Here is a 331-residue protein sequence, read N- to C-terminus: uncharacterized protein (331 aa).

This is an uncharacterized protein from Orgyia pseudotsugata (Douglas-fir tussock moth).